A 240-amino-acid polypeptide reads, in one-letter code: Lipoprotein signal peptidase (240 aa).

A run of 4 helical transmembrane segments spans residues 38–58 (LIWK…TSFL), 73–93 (LIPG…FGTL), 98–118 (PSLV…VLLF), and 120–140 (SNYL…SNII). Catalysis depends on residues Asp162 and Asp179. A helical membrane pass occupies residues 177–197 (FPDTFVIIGMIFVGIQIIISF).

It belongs to the peptidase A8 family.

It localises to the cell membrane. The catalysed reaction is Release of signal peptides from bacterial membrane prolipoproteins. Hydrolyzes -Xaa-Yaa-Zaa-|-(S,diacylglyceryl)Cys-, in which Xaa is hydrophobic (preferably Leu), and Yaa (Ala or Ser) and Zaa (Gly or Ala) have small, neutral side chains.. Its pathway is protein modification; lipoprotein biosynthesis (signal peptide cleavage). Functionally, this protein specifically catalyzes the removal of signal peptides from prolipoproteins. The protein is Lipoprotein signal peptidase of Malacoplasma penetrans (strain HF-2) (Mycoplasma penetrans).